Reading from the N-terminus, the 157-residue chain is Small ribosomal subunit protein uS7 (157 aa).

Belongs to the universal ribosomal protein uS7 family. As to quaternary structure, part of the 30S ribosomal subunit. Contacts proteins S9 and S11.

One of the primary rRNA binding proteins, it binds directly to 16S rRNA where it nucleates assembly of the head domain of the 30S subunit. Is located at the subunit interface close to the decoding center, probably blocks exit of the E-site tRNA. The protein is Small ribosomal subunit protein uS7 of Francisella tularensis subsp. tularensis (strain FSC 198).